Here is a 449-residue protein sequence, read N- to C-terminus: Phosphomannomutase (449 aa).

Ser-97 functions as the Phosphoserine intermediate in the catalytic mechanism. Positions 97, 237, 239, and 241 each coordinate Mg(2+).

This sequence belongs to the phosphohexose mutase family. It depends on Mg(2+) as a cofactor.

The enzyme catalyses alpha-D-mannose 1-phosphate = D-mannose 6-phosphate. Its pathway is amino-acid biosynthesis. Functionally, catalyzes the formation of mannose-1-P from mannose-6-P. Can also use glucose-6-P. In Methanocaldococcus jannaschii (strain ATCC 43067 / DSM 2661 / JAL-1 / JCM 10045 / NBRC 100440) (Methanococcus jannaschii), this protein is Phosphomannomutase (manB).